Consider the following 435-residue polypeptide: D-amino acid dehydrogenase (435 aa).

3 to 17 is an FAD binding site; the sequence is VLILGSGVIGTTSAW.

It belongs to the DadA oxidoreductase family. FAD is required as a cofactor.

It carries out the reaction a D-alpha-amino acid + A + H2O = a 2-oxocarboxylate + AH2 + NH4(+). It participates in amino-acid degradation; D-alanine degradation; NH(3) and pyruvate from D-alanine: step 1/1. Functionally, oxidative deamination of D-amino acids. This Xylella fastidiosa (strain M23) protein is D-amino acid dehydrogenase.